The chain runs to 639 residues: Chaperone protein DnaK (639 aa).

The residue at position 197 (Thr197) is a Phosphothreonine; by autocatalysis. Composition is skewed to basic and acidic residues over residues Ala514–Glu529 and Gly540–Asp553. 2 disordered regions span residues Ala514–Pro554 and Asp603–Gly639. Residues Ala612–Asp633 show a composition bias toward acidic residues.

It belongs to the heat shock protein 70 family.

Its function is as follows. Acts as a chaperone. This chain is Chaperone protein DnaK, found in Jannaschia sp. (strain CCS1).